The primary structure comprises 493 residues: Ketol-acid reductoisomerase (NADP(+)) (493 aa).

The 194-residue stretch at 15 to 208 (AQLGKCRFMQ…GGDRAGVLES (194 aa)) folds into the KARI N-terminal Rossmann domain. Residues 45–48 (CGAQ), R68, R76, S78, and 108–110 (DKQ) each bind NADP(+). Residue H132 is part of the active site. G158 contributes to the NADP(+) binding site. 2 consecutive KARI C-terminal knotted domains span residues 209 to 344 (SFVA…NALA) and 345 to 486 (FAGK…MKDM). The Mg(2+) site is built by D217, E221, E389, and E393. S414 contacts substrate.

The protein belongs to the ketol-acid reductoisomerase family. Mg(2+) serves as cofactor.

It catalyses the reaction (2R)-2,3-dihydroxy-3-methylbutanoate + NADP(+) = (2S)-2-acetolactate + NADPH + H(+). The enzyme catalyses (2R,3R)-2,3-dihydroxy-3-methylpentanoate + NADP(+) = (S)-2-ethyl-2-hydroxy-3-oxobutanoate + NADPH + H(+). It functions in the pathway amino-acid biosynthesis; L-isoleucine biosynthesis; L-isoleucine from 2-oxobutanoate: step 2/4. Its pathway is amino-acid biosynthesis; L-valine biosynthesis; L-valine from pyruvate: step 2/4. Its function is as follows. Involved in the biosynthesis of branched-chain amino acids (BCAA). Catalyzes an alkyl-migration followed by a ketol-acid reduction of (S)-2-acetolactate (S2AL) to yield (R)-2,3-dihydroxy-isovalerate. In the isomerase reaction, S2AL is rearranged via a Mg-dependent methyl migration to produce 3-hydroxy-3-methyl-2-ketobutyrate (HMKB). In the reductase reaction, this 2-ketoacid undergoes a metal-dependent reduction by NADPH to yield (R)-2,3-dihydroxy-isovalerate. This is Ketol-acid reductoisomerase (NADP(+)) from Aeromonas salmonicida (strain A449).